The chain runs to 891 residues: MALAQWPYLILALLSGLAVSGFPRNPSLLLGKRSLPGRAVDGIEVYSTKVNCKVTSRFAHNVVTTRAVNHANTAKEVSFDVELPKTAFITNFTLTIDGVTYPGKVKEKEVAKKQYEKAVSQGKTAGLVKASGRKLEKFTVSVNVAAGSKVTFELTYEELLKRHKGKYEMYLKVQPKQLVKHFEITVDIFEPQGISTLDAEASFITNDLLGSALTKSFSGKKGHVSFKPSLDQQRSCPTCTDSLLKGDFIITYDVNRESPANVQIVNGYFVHFFAPQGLPVVPKSVVFVIDVSGSMHGRKMEQTKDALLKILEDVKQDDYLNFILFSGDVTTWKDSLVPATPENIQEASKFVMDIQDRGMTNINDALLRGISMLNKAREEHTVPERSTSIIIMLTDGDANVGESRPEKIQENVRNAIGGKFPLYNLGFGNNLNYNFLENMALENHGLARRIYEDSDANLQLQGFYEEVANPLLTGVEVEYPQNAILDLTQNSYQHFYDGSEIVVAGRLADEDMNSFKAAVKGHGAINDLTFTEEVDMKEMEKALQERDYIFGDYIERLWAYLTIEQLLDKRKNAQGEEKEILTAQALELSLKYHFVTPLTSMVVTKPEDNENQTAIANKPGEGPLDAEEVPSMAYLTSYQAPQTPYYYVDGDPHFIIQIPEKDDAICFNIDEDPGTVLRLIQDPVTGLTVNGQIIGEKTGRSDSQTRRTYFGKLGIASAQMDFRIEVTRENITLWNGDSLSTFSWLDTVMVTQDGLSVMINRKKNMVVSFGDGVTFVVVLHQVWKKEPAHHDFLGFYVVNSRGMSAQTHGLLGQFFHPFDFQVSDVHPGSDPTKPDATMVVKNHQLTVTRGSQKDYRKDISVGRNVACWFVHNNGQGLIDGIHRDYIVPNLF.

The N-terminal stretch at 1–20 (MALAQWPYLILALLSGLAVS) is a signal peptide. Residues 21–34 (GFPRNPSLLLGKRS) constitute a propeptide that is removed on maturation. One can recognise a VIT domain in the interval 29 to 158 (LLGKRSLPGR…KVTFELTYEE (130 aa)). Residue asparagine 91 is glycosylated (N-linked (GlcNAc...) asparagine). In terms of domain architecture, VWFA spans 284-467 (SVVFVIDVSG…LQLQGFYEEV (184 aa)). Aspartate 651 is subject to Aspartate 1-(chondroitin 4-sulfate)-ester. A propeptide spanning residues 652-891 (PHFIIQIPEK…HRDYIVPNLF (240 aa)) is cleaved from the precursor.

The protein belongs to the ITIH family. In terms of assembly, I-alpha-I plasma protease inhibitors are assembled from one or two heavy chains (H1, H2 or H3) and one light chain, bikunin. Inter-alpha-inhibitor (I-alpha-I) is composed of H1, H2 and bikunin, inter-alpha-like inhibitor (I-alpha-LI) of H2 and bikunin, and pre-alpha-inhibitor (P-alpha-I) of H3 and bikunin.

The protein localises to the secreted. In terms of biological role, may act as a carrier of hyaluronan in serum or as a binding protein between hyaluronan and other matrix protein, including those on cell surfaces in tissues to regulate the localization, synthesis and degradation of hyaluronan which are essential to cells undergoing biological processes. This Bos taurus (Bovine) protein is Inter-alpha-trypsin inhibitor heavy chain H3 (ITIH3).